The chain runs to 234 residues: Proteasome subunit alpha type-2 (234 aa).

Position 2 is an N-acetylalanine (Ala-2). Phosphotyrosine is present on Tyr-121.

Belongs to the peptidase T1A family. The 26S proteasome consists of a 20S proteasome core and two 19S regulatory subunits. The 20S proteasome core is composed of 28 subunits that are arranged in four stacked rings, resulting in a barrel-shaped structure. The two end rings are each formed by seven alpha subunits, and the two central rings are each formed by seven beta subunits. The catalytic chamber with the active sites is on the inside of the barrel.

The protein localises to the cytoplasm. It is found in the nucleus. In terms of biological role, the proteasome is a multicatalytic proteinase complex which is characterized by its ability to cleave peptides with Arg, Phe, Tyr, Leu, and Glu adjacent to the leaving group at neutral or slightly basic pH. The proteasome has an ATP-dependent proteolytic activity. PSMA2 may have a potential regulatory effect on another component(s) of the proteasome complex through tyrosine phosphorylation. In Carassius auratus (Goldfish), this protein is Proteasome subunit alpha type-2 (psma2).